We begin with the raw amino-acid sequence, 414 residues long: Gamma-glutamyl phosphate reductase (414 aa).

Belongs to the gamma-glutamyl phosphate reductase family.

It is found in the cytoplasm. It catalyses the reaction L-glutamate 5-semialdehyde + phosphate + NADP(+) = L-glutamyl 5-phosphate + NADPH + H(+). It functions in the pathway amino-acid biosynthesis; L-proline biosynthesis; L-glutamate 5-semialdehyde from L-glutamate: step 2/2. Catalyzes the NADPH-dependent reduction of L-glutamate 5-phosphate into L-glutamate 5-semialdehyde and phosphate. The product spontaneously undergoes cyclization to form 1-pyrroline-5-carboxylate. This chain is Gamma-glutamyl phosphate reductase, found in Xanthomonas campestris pv. campestris (strain B100).